The primary structure comprises 276 residues: MSPTAGLGLKSQHYAEALASDAEGLWFEVHPENYMAAGGPRLRWLEAIREKRSLSLHGVGLSLAADADPDPDHLAALKTLADRFEPFGVSEHLAWSTHRGAHQPDLLPFPRTRAALDRVARNIERMQDVLGRTILVENPSLYLPLTGHDLDETDFLIELTRRTGCGLLVDVNNVFVSASNLGYAAETYLDALPAEAIGEIHLAGHGPDEGGSALLIDTHGAPIAESVWALYQRLIERVGPRPTLIERDDDIPAFDVLMAERDRAHGMLTPSAASRL.

This sequence belongs to the UPF0276 family.

In Caulobacter sp. (strain K31), this protein is UPF0276 protein Caul_0757.